We begin with the raw amino-acid sequence, 419 residues long: Serine hydroxymethyltransferase 2 (419 aa).

(6S)-5,6,7,8-tetrahydrofolate is bound by residues L120 and 124-126 (GHL). An N6-(pyridoxal phosphate)lysine modification is found at K229.

Belongs to the SHMT family. In terms of assembly, homodimer. The cofactor is pyridoxal 5'-phosphate.

The protein localises to the cytoplasm. The enzyme catalyses (6R)-5,10-methylene-5,6,7,8-tetrahydrofolate + glycine + H2O = (6S)-5,6,7,8-tetrahydrofolate + L-serine. It participates in one-carbon metabolism; tetrahydrofolate interconversion. It functions in the pathway amino-acid biosynthesis; glycine biosynthesis; glycine from L-serine: step 1/1. In terms of biological role, catalyzes the reversible interconversion of serine and glycine with tetrahydrofolate (THF) serving as the one-carbon carrier. This reaction serves as the major source of one-carbon groups required for the biosynthesis of purines, thymidylate, methionine, and other important biomolecules. Also exhibits THF-independent aldolase activity toward beta-hydroxyamino acids, producing glycine and aldehydes, via a retro-aldol mechanism. This Salmonella typhi protein is Serine hydroxymethyltransferase 2.